Reading from the N-terminus, the 263-residue chain is Protein PYRICULARIA ORYZAE RESISTANCE 21 (263 aa).

Residues 1–68 (MGILVISVDL…IWCKAGKIIK (68 aa)) enclose the HMA domain. Residues C12 and C15 each coordinate a metal cation. Residues 126–153 (CEKPKPCEKPPPCKPEEPPKPPPEKPPP) form a disordered region. Basic and acidic residues predominate over residues 139 to 153 (KPEEPPKPPPEKPPP).

Involved in defense responses. Contributes to slowing defense responses toward Magnaporthe oryzae. The sequence is that of Protein PYRICULARIA ORYZAE RESISTANCE 21 from Oryza sativa subsp. indica (Rice).